A 316-amino-acid chain; its full sequence is Bifunctional peptidase and (3S)-lysyl hydroxylase JMJD7 (316 aa).

Residue Cys19 is modified to Cysteine sulfenic acid (-SOH). 2 residues coordinate 2-oxoglutarate: Tyr123 and Thr172. Tyr123 contacts succinate. One can recognise a JmjC domain in the interval 124–310; that stretch reads IQKQNSNLSV…YCYYRMLEQM (187 aa). Fe cation-binding residues include His175 and Asp177. Positions 181, 183, and 190 each coordinate 2-oxoglutarate. Tyr183 and Lys190 together coordinate succinate. His278 contacts Fe cation. Trp292 contacts 2-oxoglutarate.

Homodimer; disulfide-linked. Fe(2+) serves as cofactor. Expressed in the pars intercerebralis and fan-shaped body, regions known to be involved in sleep.

The protein resides in the nucleus. The protein localises to the cytoplasm. It catalyses the reaction L-lysyl-[protein] + 2-oxoglutarate + O2 = (3S)-3-hydroxy-L-lysyl-[protein] + succinate + CO2. Its function is as follows. Bifunctional enzyme that acts both as an endopeptidase and 2-oxoglutarate-dependent monooxygenase. Endopeptidase that cleaves histones N-terminal tails at the carboxyl side of methylated arginine or lysine residues, to generate 'tailless nucleosomes', which may trigger transcription elongation. Hydroxylates the guanylate binding protein 128up. May be involved in regulation of behavior and circadian rhythms. The chain is Bifunctional peptidase and (3S)-lysyl hydroxylase JMJD7 from Drosophila melanogaster (Fruit fly).